The following is a 2265-amino-acid chain: Collagen alpha-6(VI) chain (2265 aa).

The signal sequence occupies residues 1-18; it reads MLLVLCLTMICFHVCVNQ. Residues 19–1390 are nonhelical region; the sequence is DSGPEYADVV…TCCCLLCKCT (1372 aa). VWFA domains follow at residues 26–205, 228–406, 435–605, 621–790, 808–981, 999–1170, and 1186–1378; these read DVVF…IKDV, DVVF…LKKL, DIYL…RNQV, DIMF…EDDL, DVVF…FSDV, DLVF…KKRI, and DVVV…INVA. Asparagine 197, asparagine 238, and asparagine 346 each carry an N-linked (GlcNAc...) asparagine glycan. Asparagine 760 carries N-linked (GlcNAc...) asparagine glycosylation. The segment at 1391 to 1724 is triple-helical region; that stretch reads GGDGAMGDPG…GRKGVKGARG (334 aa). The interval 1398 to 1722 is disordered; the sequence is DPGSAGKKGP…PPGRKGVKGA (325 aa). A compositionally biased stretch (acidic residues) spans 1455–1470; sequence EEGEVGEDGLDGLDGE. The segment covering 1497 to 1507 has biased composition (basic and acidic residues); the sequence is AAGDRGAKGLR. A Cell attachment site motif is present at residues 1507–1509; sequence RGD. Residues 1546 to 1558 show a composition bias toward basic residues; that stretch reads SRRKMVVHGRRGH. The nonhelical region stretch occupies residues 1725–2265; sequence LASFSTCDLI…ATSKLGKRSA (541 aa). VWFA domains lie at 1756–1936 and 1964–2165; these read ELVF…ERLQ and DTAF…INSI. The tract at residues 2186–2205 is disordered; the sequence is SRDLKPPPRQFRSFVPGPQK.

This sequence belongs to the type VI collagen family. In terms of assembly, trimers composed of three different chains: alpha-1(VI), alpha-2(VI), and alpha-3(VI) or alpha-4(VI) or alpha-5(VI) or alpha-6(VI). Post-translationally, prolines at the third position of the tripeptide repeating unit (G-X-Y) are hydroxylated in some or all of the chains. As to expression, in newborn, it is expressed in lung, heart, kidney, muscle, brain, intestine, skin, femur and sternum. In adult, it is expressed in lung, heart, muscle, ovary, brain, liver and sternum.

It is found in the secreted. The protein resides in the extracellular space. The protein localises to the extracellular matrix. Functionally, collagen VI acts as a cell-binding protein. In Mus musculus (Mouse), this protein is Collagen alpha-6(VI) chain (Col6a6).